We begin with the raw amino-acid sequence, 183 residues long: Neuroblastoma suppressor of tumorigenicity 1 (183 aa).

Residues 1 to 19 (MVMCVRAVLVCVLLELSRA) form the signal peptide. Disulfide bonds link C38–C88, C52–C102, C62–C121, C66–C123, and C85–C126. The CTCK domain occupies 38–127 (CEAKNITQIV…ILHCSCQSCS (90 aa)). A disordered region spans residues 145 to 170 (AQDLPSLPDATHTHPQHAHMQADQRD).

This sequence belongs to the DAN family.

It localises to the secreted. Functionally, may act as a tumor suppressor. The sequence is that of Neuroblastoma suppressor of tumorigenicity 1 (nbl1) from Danio rerio (Zebrafish).